A 60-amino-acid polypeptide reads, in one-letter code: Large ribosomal subunit protein bL32 (60 aa).

Belongs to the bacterial ribosomal protein bL32 family.

In Kosmotoga olearia (strain ATCC BAA-1733 / DSM 21960 / TBF 19.5.1), this protein is Large ribosomal subunit protein bL32.